Consider the following 154-residue polypeptide: Large ribosomal subunit protein bL17 (154 aa).

Residues 127-154 (TAAKQDRAKRVKGSKKAETEKEGGESAE) form a disordered region. The span at 141 to 154 (KKAETEKEGGESAE) shows a compositional bias: basic and acidic residues.

This sequence belongs to the bacterial ribosomal protein bL17 family. In terms of assembly, part of the 50S ribosomal subunit. Contacts protein L32.

The chain is Large ribosomal subunit protein bL17 from Chlorobaculum parvum (strain DSM 263 / NCIMB 8327) (Chlorobium vibrioforme subsp. thiosulfatophilum).